The chain runs to 209 residues: Ribosomal RNA large subunit methyltransferase E (209 aa).

Positions 63, 65, 83, 99, and 124 each coordinate S-adenosyl-L-methionine. The active-site Proton acceptor is Lys-164.

It belongs to the class I-like SAM-binding methyltransferase superfamily. RNA methyltransferase RlmE family.

The protein localises to the cytoplasm. It carries out the reaction uridine(2552) in 23S rRNA + S-adenosyl-L-methionine = 2'-O-methyluridine(2552) in 23S rRNA + S-adenosyl-L-homocysteine + H(+). Functionally, specifically methylates the uridine in position 2552 of 23S rRNA at the 2'-O position of the ribose in the fully assembled 50S ribosomal subunit. In Photorhabdus laumondii subsp. laumondii (strain DSM 15139 / CIP 105565 / TT01) (Photorhabdus luminescens subsp. laumondii), this protein is Ribosomal RNA large subunit methyltransferase E.